The chain runs to 862 residues: Aldehyde-alcohol dehydrogenase (862 aa).

Cys244 is an active-site residue. An NAD(+)-binding site is contributed by Gly420–Asn425.

This sequence in the N-terminal section; belongs to the aldehyde dehydrogenase family. It in the C-terminal section; belongs to the iron-containing alcohol dehydrogenase family.

It catalyses the reaction a primary alcohol + NAD(+) = an aldehyde + NADH + H(+). The catalysed reaction is a secondary alcohol + NAD(+) = a ketone + NADH + H(+). The enzyme catalyses an aldehyde + NAD(+) + H2O = a carboxylate + NADH + 2 H(+). Functionally, has both aldehyde and alcohol dehydrogenase activities. Can use acetaldehyde, butyraldehyde, butanol and ethanol. The sequence is that of Aldehyde-alcohol dehydrogenase from Clostridium acetobutylicum (strain ATCC 824 / DSM 792 / JCM 1419 / IAM 19013 / LMG 5710 / NBRC 13948 / NRRL B-527 / VKM B-1787 / 2291 / W).